The chain runs to 665 residues: Macrolide export ATP-binding/permease protein MacB (665 aa).

The region spanning 17-255 (MQVKGLIREF…AAQPASIIDK (239 aa)) is the ABC transporter domain. An ATP-binding site is contributed by 53-60 (GQSGSGKS). The next 4 membrane-spanning stretches (helical) occupy residues 287 to 307 (LLTMLGIIIGIASVVSVVGLG), 544 to 564 (IAIISLIVGGIGVMNIMLVSV), 588 to 608 (FLIEAILVCILGGLLGIGLAF), and 630 to 650 (SIIAAFVCSTLIGVVFGFLPA).

The protein belongs to the ABC transporter superfamily. Macrolide exporter (TC 3.A.1.122) family. In terms of assembly, homodimer. Part of the tripartite efflux system MacAB-TolC, which is composed of an inner membrane transporter, MacB, a periplasmic membrane fusion protein, MacA, and an outer membrane component, TolC. The complex forms a large protein conduit and can translocate molecules across both the inner and outer membranes. Interacts with MacA.

The protein localises to the cell inner membrane. Part of the tripartite efflux system MacAB-TolC. MacB is a non-canonical ABC transporter that contains transmembrane domains (TMD), which form a pore in the inner membrane, and an ATP-binding domain (NBD), which is responsible for energy generation. Confers resistance against macrolides. In Psychrobacter cryohalolentis (strain ATCC BAA-1226 / DSM 17306 / VKM B-2378 / K5), this protein is Macrolide export ATP-binding/permease protein MacB.